The sequence spans 614 residues: Serine/threonine-protein kinase Pkn1 (614 aa).

In terms of domain architecture, Protein kinase spans 13-276 (YKVIAELGHG…TSGEQLQVTL (264 aa)). ATP is bound by residues 19–27 (LGHGLWSRD) and Lys-42.

This sequence belongs to the protein kinase superfamily. Ser/Thr protein kinase family. Interacts with PknD, interacts with and phosphorylates IncG. In terms of processing, autophosphorylates on serine and threonine residues. Present in elementary bodies 40 hours post-infection as 2 proteins of approximately 70 and 65 kDa; the smaller one may be due to differential phosphorylation or degradation.

The enzyme catalyses L-seryl-[protein] + ATP = O-phospho-L-seryl-[protein] + ADP + H(+). The catalysed reaction is L-threonyl-[protein] + ATP = O-phospho-L-threonyl-[protein] + ADP + H(+). Functionally, together with the serine/threonine kinase PknD, may play a role in specific interactions with host proteins during host intracellular growth. Autophosphorylates and phosphorylates IncG, an inclusion-membrane protein required for the modification of the nascent chlamydial inclusion. The polypeptide is Serine/threonine-protein kinase Pkn1 (pkn1) (Chlamydia trachomatis serovar L2 (strain ATCC VR-902B / DSM 19102 / 434/Bu)).